The sequence spans 923 residues: Dynein axonemal intermediate chain 3 (923 aa).

The disordered stretch occupies residues 1-35; that stretch reads MAPKPPKSPKGQKKGKKNMKQQLLVPEEEEPMNME. The span at 10 to 19 shows a compositional bias: basic residues; the sequence is KGQKKGKKNM. 4 WD repeats span residues 398–438, 480–536, 702–741, and 745–785; these read ESPD…DRIE, GHRK…PAVT, VHDG…GPLL, and CGPK…HEPA. Residues 869 to 889 are a coiled coil; the sequence is LELVKKKAKIYQKTKEQMEAE.

In terms of assembly, interacts with ACTR2; this interaction reduces binding of the Arp2/3 complex to the VCA domain of nucleation promoting factors. Part of the multisubunit axonemal dynein complex formed at least of two heavy chains and a number of intermediate and light chains. Found in a associated with the catalytic heavy chain DNAH2, the intermediate chain DNAI4, and the light chain DYNLT1. Strongly expressed in the testes. Detected also in brain and lung tissues.

The protein resides in the cytoplasm. Its function is as follows. Acts as a negative regulator of cell migration, invasion, and metastasis downstream of p53/TP53, through inhibition of Arp2/3 complex-mediated actin polymerization. Via its association with the multisubunit axonemal dynein complex, is potentially involved in the regulation of cilia function. May play a role in osteogenesis of dental tissue-derived mesenchymal stem cells. This chain is Dynein axonemal intermediate chain 3 (Dnai3), found in Mus musculus (Mouse).